Reading from the N-terminus, the 232-residue chain is MMYQQGCFAGGTVLRLAKDLAENNKGARVLVVCSEITAVTFRGPSDTHLDSLVGQALFGDGAAAVIIGADPVPEVEKPLFELVSAAQTVLPDSDGAIDGHLREVGLTFHLLKDVPGLISKNIEKSLNEALKPIGISDWNSLFWIAHPGGPAILDQVEAKLALKPEKLEATRQVLSDYGNMSSACVLFILDEVRRKSAEKGLETTGEGLEWGVLFGFGPGLTVETVVLHSVAA.

The active site involves C7.

This sequence belongs to the thiolase-like superfamily. Chalcone/stilbene synthases family.

The enzyme catalyses (E)-4-coumaroyl-CoA + 3 malonyl-CoA + 3 H(+) = 2',4,4',6'-tetrahydroxychalcone + 3 CO2 + 4 CoA. The protein operates within secondary metabolite biosynthesis; flavonoid biosynthesis. Its function is as follows. The primary product of this enzyme is 4,2',4',6'-tetrahydroxychalcone (also termed naringenin-chalcone or chalcone) which can under specific conditions spontaneously isomerize into naringenin. This Malus domestica (Apple) protein is Chalcone synthase (CHS).